The primary structure comprises 699 residues: Condensin complex subunit 2 (699 aa).

2 disordered regions span residues 1 to 35 and 176 to 203; these read MSTSTPQSGGRRKPETPDSAFLSPATRPQPISAAA and ESQATEDTENQETDTGPQDGRKNPKRRK.

It belongs to the CND2 (condensin subunit 2) family. In terms of assembly, component of the condensin complex, which contains the XCAP-E/SMC2 and XCAP-C/SMC4 heterodimer, and three non SMC subunits that probably regulate the complex: XCAP-H/NCAPH, XCAP-D2/NCAPD2 and XCAP-G/NCAPG. In terms of processing, phosphorylated by CDK1. Its phosphorylation, as well as that of XCAP-D2 and XCAP-G subunits, activates the condensin complex and is required for chromosome condensation.

The protein resides in the nucleus. It is found in the cytoplasm. It localises to the chromosome. Its function is as follows. Regulatory subunit of the condensin complex, a complex required for conversion of interphase chromatin into mitotic-like condense chromosomes. The condensin complex probably introduces positive supercoils into relaxed DNA in the presence of type I topoisomerases and converts nicked DNA into positive knotted forms in the presence of type II topoisomerase. The sequence is that of Condensin complex subunit 2 (ncaph) from Xenopus laevis (African clawed frog).